Here is a 667-residue protein sequence, read N- to C-terminus: Small ribosomal subunit protein mS39 (667 aa).

Residues 1–11 constitute a mitochondrion transit peptide; it reads MASSCSQALRH. The segment at 199–226 is disordered; the sequence is EAEQRSEEMEDIQDETQTKKGRSPKASD. 6 PPR repeats span residues 249–283, 284–323, 324–360, 361–400, 482–516, and 565–599; these read NTRS…RLKA, DVHI…KVKP, NLLT…SIEP, SLAS…SFTP, SSNA…GHGN, and TASS…NRVP.

The protein belongs to the mitochondrion-specific ribosomal protein mS39 family.

The protein resides in the mitochondrion. In terms of biological role, mitochondrial RNA-binding protein that may have a role in mitochondrial translation. The sequence is that of Small ribosomal subunit protein mS39 (ptcd3) from Danio rerio (Zebrafish).